A 123-amino-acid chain; its full sequence is Large ribosomal subunit protein uL14 (123 aa).

The protein belongs to the universal ribosomal protein uL14 family. In terms of assembly, part of the 50S ribosomal subunit. Forms a cluster with proteins L3 and L19. In the 70S ribosome, L14 and L19 interact and together make contacts with the 16S rRNA in bridges B5 and B8.

Its function is as follows. Binds to 23S rRNA. Forms part of two intersubunit bridges in the 70S ribosome. The chain is Large ribosomal subunit protein uL14 from Aliivibrio salmonicida (strain LFI1238) (Vibrio salmonicida (strain LFI1238)).